The chain runs to 700 residues: pH-response regulator protein palI/prr-5 (700 aa).

At 1-8 (MLRPATPL) the chain is on the cytoplasmic side. The chain crosses the membrane as a helical span at residues 9 to 29 (AVLLFAAFGLLTLATISTPII). Over 30–90 (KQIPLSSFEI…PRATRSTLSS (61 aa)) the chain is Extracellular. Residues 91–111 (ILIVHPVAALITLINFVLAIV) traverse the membrane as a helical segment. Residues 112 to 123 (AHFHSPSHSARY) lie on the Cytoplasmic side of the membrane. The chain crosses the membrane as a helical span at residues 124 to 144 (LLILFIVSFVDFIVCLLCFLV). At 145 to 152 (DVLLFIPH) the chain is on the extracellular side. A helical membrane pass occupies residues 153-173 (LSWGSYIVVAATILVAFCGLV). Over 174–700 (TCAMRRTLVN…GNMPRAAGPR (527 aa)) the chain is Cytoplasmic. Disordered stretches follow at residues 226–491 (SGAN…GIRD), 507–560 (VPDP…PISE), and 573–700 (DVDP…AGPR). The span at 234–252 (KLPEFTTFEKKDDRSEERI) shows a compositional bias: basic and acidic residues. Gly residues predominate over residues 320–378 (GRGGMPPGGYRGRGGFPGPGRGGGPPQNGRGGYGPPGRGRGGYGPPPRGYGGPGPRGGR). The segment covering 414-424 (SPYANRQQSPG) has biased composition (polar residues). 2 stretches are compositionally biased toward polar residues: residues 593 to 603 (SMQSPPASNSY) and 615 to 637 (ESENSNFTSISQRGINPRWNSAN). The span at 657–671 (VVPRRPVNRPGAGPA) shows a compositional bias: low complexity.

This sequence belongs to the palI/RIM9 family.

The protein localises to the cell membrane. In terms of biological role, required for the proteolytic cleavage of the transcription factor pacc-1 in response to alkaline ambient pH. In Neurospora crassa (strain ATCC 24698 / 74-OR23-1A / CBS 708.71 / DSM 1257 / FGSC 987), this protein is pH-response regulator protein palI/prr-5 (prr-5).